Consider the following 505-residue polypeptide: Cyclin-dependent kinase C-1 (505 aa).

Residues 26-325 (FEKLEQIGEG…AKDALDAEYF (300 aa)) enclose the Protein kinase domain. ATP is bound by residues 32–40 (IGEGTYGQV) and Lys-55. The residue at position 37 (Tyr-37) is a Phosphotyrosine. Asp-164 (proton acceptor) is an active-site residue. Thr-198 bears the Phosphothreonine mark. The segment at 336–505 (SLPTYESSHE…QRNQQYGWQQ (170 aa)) is disordered. A compositionally biased stretch (low complexity) spans 429–456 (PPSGNQSGGYNQSRGGYSSGSYPPQGRG). Residues 482 to 491 (GQYGGSGSSG) are compositionally biased toward gly residues. The segment covering 492 to 505 (RGQNQRNQQYGWQQ) has biased composition (low complexity).

The protein belongs to the protein kinase superfamily. CMGC Ser/Thr protein kinase family. CDC2/CDKX subfamily. In terms of assembly, interacts with CYCT1-3. As to expression, highly expressed in flowers. Expressed in seedlings, roots, rosettes and stems.

It carries out the reaction L-seryl-[protein] + ATP = O-phospho-L-seryl-[protein] + ADP + H(+). The catalysed reaction is L-threonyl-[protein] + ATP = O-phospho-L-threonyl-[protein] + ADP + H(+). It catalyses the reaction [DNA-directed RNA polymerase] + ATP = phospho-[DNA-directed RNA polymerase] + ADP + H(+). The sequence is that of Cyclin-dependent kinase C-1 (CDKC-1) from Arabidopsis thaliana (Mouse-ear cress).